A 547-amino-acid chain; its full sequence is Inositol 1,4,5-trisphosphate receptor-interacting protein-like 1 (547 aa).

Positions 1–16 (MAVISLLFLAVMYVVH) are cleaved as a signal peptide. Residues 17–96 (HPLMVSDRMD…PFQASGQDGG (80 aa)) are Extracellular-facing. A coiled-coil region spans residues 28-66 (DTLARSRQLEKRMSEEMRQLEIEFEERSRAAEEKQKAEN). Residues 97 to 117 (PLGWMLGNLWNAGLFCLFLIF) form a helical membrane-spanning segment. Residues 118-547 (ELLRQNMQHE…LPCSPLAGGL (430 aa)) lie on the Cytoplasmic side of the membrane.

Belongs to the ITPRIP family.

The protein localises to the cell membrane. Functionally, functions as a ligand of CD3E, inhibiting TCR-CD3 complex signaling to regulate T cell activation. Induces stable CD3E-NCK1 binding, thereby preventing the CD3E-ZAP70 interaction and subsequently inhibiting the activation of the downstream ERK-NFkB signaling cascade and calcium influx. The sequence is that of Inositol 1,4,5-trisphosphate receptor-interacting protein-like 1 (Itpripl1) from Rattus norvegicus (Rat).